The primary structure comprises 183 residues: ATP synthase subunit b, chloroplastic (183 aa).

Residues 27–49 (LATNLINLTVVVGVLIFFGKGVL) form a helical membrane-spanning segment.

Belongs to the ATPase B chain family. F-type ATPases have 2 components, F(1) - the catalytic core - and F(0) - the membrane proton channel. F(1) has five subunits: alpha(3), beta(3), gamma(1), delta(1), epsilon(1). F(0) has four main subunits: a(1), b(1), b'(1) and c(10-14). The alpha and beta chains form an alternating ring which encloses part of the gamma chain. F(1) is attached to F(0) by a central stalk formed by the gamma and epsilon chains, while a peripheral stalk is formed by the delta, b and b' chains.

It localises to the plastid. It is found in the chloroplast thylakoid membrane. F(1)F(0) ATP synthase produces ATP from ADP in the presence of a proton or sodium gradient. F-type ATPases consist of two structural domains, F(1) containing the extramembraneous catalytic core and F(0) containing the membrane proton channel, linked together by a central stalk and a peripheral stalk. During catalysis, ATP synthesis in the catalytic domain of F(1) is coupled via a rotary mechanism of the central stalk subunits to proton translocation. Functionally, component of the F(0) channel, it forms part of the peripheral stalk, linking F(1) to F(0). This Lolium perenne (Perennial ryegrass) protein is ATP synthase subunit b, chloroplastic.